The following is a 347-amino-acid chain: Gentisate 1,2 dioxygenase 1 (347 aa).

The 68-residue stretch at 96 to 163 (LQLILPGEVA…DSDKPMIWMD (68 aa)) folds into the Cupin type-2 domain.

This sequence belongs to the gentisate 1,2-dioxygenase family. In terms of assembly, homotetramer. It depends on Fe(2+) as a cofactor.

It carries out the reaction 2,5-dihydroxybenzoate + O2 = 3-maleylpyruvate + H(+). With respect to regulation, completely inhibited by the presence of 5 mM Cu(2+). Partially inhibited with 5 mM Mn(2+), Zn(2+) or EDTA. Functionally, involved in the degradation of gentisate. Catalyzes the conversion of gentisate (2,5-dihydroxybenzoate) to maleylpyruvate. Exhibits broad substrate specificities towards alkyl and halogenated gentisates. The protein is Gentisate 1,2 dioxygenase 1 of Aquipseudomonas alcaligenes (Pseudomonas alcaligenes).